A 521-amino-acid polypeptide reads, in one-letter code: Glutamate--cysteine ligase (521 aa).

The protein belongs to the glutamate--cysteine ligase type 1 family. Type 1 subfamily.

It carries out the reaction L-cysteine + L-glutamate + ATP = gamma-L-glutamyl-L-cysteine + ADP + phosphate + H(+). It participates in sulfur metabolism; glutathione biosynthesis; glutathione from L-cysteine and L-glutamate: step 1/2. The sequence is that of Glutamate--cysteine ligase from Aliivibrio fischeri (strain MJ11) (Vibrio fischeri).